Reading from the N-terminus, the 269-residue chain is uncharacterized protein (269 aa).

Residues 1-12 are compositionally biased toward basic residues; it reads MSKRTNNKKRKH. Residues 1-82 form a disordered region; it reads MSKRTNNKKR…KKKENGNENV (82 aa). Residues 21–33 are compositionally biased toward acidic residues; that stretch reads PENQDENQDEEFL. The span at 34-63 shows a compositional bias: basic and acidic residues; it reads EDKNKDKNQNKNKDKNKNKDMNKNKNKDMN.

This is an uncharacterized protein from Dictyostelium discoideum (Social amoeba).